Consider the following 611-residue polypeptide: Probable inactive purple acid phosphatase 27 (611 aa).

An N-terminal signal peptide occupies residues 1–18 (MARNFLLVLLWFIVQVSS). 2 N-linked (GlcNAc...) asparagine glycosylation sites follow: Asn263 and Asn271. Fe cation is bound at residue Asp293. Asn314 carries N-linked (GlcNAc...) asparagine glycosylation. Fe cation is bound by residues Asp334 and Tyr337. Asp334 is a Zn(2+) binding site. The Zn(2+) site is built by Asn367, His456, and His498. Asn367 provides a ligand contact to substrate. A substrate-binding site is contributed by 498–500 (HVH). Position 500 (His500) interacts with Fe cation.

This sequence belongs to the metallophosphoesterase superfamily. Purple acid phosphatase family. In terms of assembly, homodimer. Fe cation is required as a cofactor. The cofactor is Zn(2+). Expressed in roots, stems, leaves, flowers and siliques.

The protein resides in the secreted. The sequence is that of Probable inactive purple acid phosphatase 27 (PAP27) from Arabidopsis thaliana (Mouse-ear cress).